The primary structure comprises 112 residues: Ig kappa chain V-III region PC 7132 (112 aa).

The framework-1 stretch occupies residues Asp-1–Cys-23. A disulfide bridge links Cys-23 with Cys-92. The segment at Arg-24–Asn-38 is complementarity-determining-1. The segment at Trp-39 to Tyr-53 is framework-2. Residues Ala-54–Ser-60 form a complementarity-determining-2 region. Positions Gly-61–Cys-92 are framework-3. The complementarity-determining-3 stretch occupies residues Gln-93–Thr-102. Positions Phe-103–Lys-112 are framework-4.

This chain is Ig kappa chain V-III region PC 7132, found in Mus musculus (Mouse).